Consider the following 538-residue polypeptide: Carboxypeptidase 2 (538 aa).

Residues 1 to 21 form the signal peptide; that stretch reads MVAYRFLTLISLGLGSHCASA. An N-linked (GlcNAc...) asparagine glycan is attached at Asn46. Residues 53–76 form a disordered region; the sequence is PAFTSPGTVPRGFSDGTSGPTRDE. One can recognise a Peptidase M14 domain in the interval 71–351; that stretch reads GPTRDETMEG…VMVKSILQTA (281 aa). Positions 136, 139, and 224 each coordinate Zn(2+). The active-site Proton donor/acceptor is Glu322. Asn393 and Asn459 each carry an N-linked (GlcNAc...) asparagine glycan.

This sequence belongs to the peptidase M14 family. The cofactor is Zn(2+).

Its subcellular location is the secreted. In terms of biological role, extracellular metalloprotease that contributes to pathogenicity. The sequence is that of Carboxypeptidase 2 (MCPB) from Trichophyton equinum (Horse ringworm fungus).